The chain runs to 91 residues: Tachykinin-like peptide (91 aa).

Residues 1 to 19 (MKILVAFAVIMLVSAQVLA) form the signal peptide. Residues 20–51 (AEIGLNDEPEWYSDQIQEDLPVFENFLQRIAR) constitute a propeptide that is removed on maturation. Residue methionine 62 is modified to Methionine amide. Residues 64–91 (KRNNGFGQMSRKRSAERNTIHNYERRRK) are disordered. Residues 66 to 91 (NNGFGQMSRKRSAERNTIHNYERRRK) constitute a propeptide that is removed on maturation. The segment covering 76 to 91 (RSAERNTIHNYERRRK) has biased composition (basic and acidic residues).

Expressed by the skin glands.

The protein resides in the secreted. Functionally, tachykinins are active peptides which excite neurons, evoke behavioral responses, are potent vasodilators and secretagogues, and contract (directly or indirectly) many smooth muscles. In vitro, induces contraction of guinea pig ileum smooth muscle in a dose-dependent manner. The polypeptide is Tachykinin-like peptide (Theloderma corticale (Kwangsi warty tree frog)).